The primary structure comprises 195 residues: Peptidyl-tRNA hydrolase (195 aa).

Tyrosine 18 provides a ligand contact to tRNA. The active-site Proton acceptor is the histidine 23. Tyrosine 69, asparagine 71, and asparagine 117 together coordinate tRNA.

This sequence belongs to the PTH family. Monomer.

Its subcellular location is the cytoplasm. It carries out the reaction an N-acyl-L-alpha-aminoacyl-tRNA + H2O = an N-acyl-L-amino acid + a tRNA + H(+). Hydrolyzes ribosome-free peptidyl-tRNAs (with 1 or more amino acids incorporated), which drop off the ribosome during protein synthesis, or as a result of ribosome stalling. Its function is as follows. Catalyzes the release of premature peptidyl moieties from peptidyl-tRNA molecules trapped in stalled 50S ribosomal subunits, and thus maintains levels of free tRNAs and 50S ribosomes. The protein is Peptidyl-tRNA hydrolase of Nitrosomonas europaea (strain ATCC 19718 / CIP 103999 / KCTC 2705 / NBRC 14298).